We begin with the raw amino-acid sequence, 186 residues long: Translation initiation factor IF-3 (186 aa).

Positions 1 to 20 (MINRNSGKDRDRSRSGDKEL) are disordered.

The protein belongs to the IF-3 family. As to quaternary structure, monomer.

It localises to the cytoplasm. IF-3 binds to the 30S ribosomal subunit and shifts the equilibrium between 70S ribosomes and their 50S and 30S subunits in favor of the free subunits, thus enhancing the availability of 30S subunits on which protein synthesis initiation begins. The polypeptide is Translation initiation factor IF-3 (Borrelia duttonii (strain Ly)).